Reading from the N-terminus, the 314-residue chain is Methionyl-tRNA formyltransferase (314 aa).

A (6S)-5,6,7,8-tetrahydrofolate-binding site is contributed by 109–112 (SLLP).

This sequence belongs to the Fmt family.

The catalysed reaction is L-methionyl-tRNA(fMet) + (6R)-10-formyltetrahydrofolate = N-formyl-L-methionyl-tRNA(fMet) + (6S)-5,6,7,8-tetrahydrofolate + H(+). Its function is as follows. Attaches a formyl group to the free amino group of methionyl-tRNA(fMet). The formyl group appears to play a dual role in the initiator identity of N-formylmethionyl-tRNA by promoting its recognition by IF2 and preventing the misappropriation of this tRNA by the elongation apparatus. The chain is Methionyl-tRNA formyltransferase from Syntrophomonas wolfei subsp. wolfei (strain DSM 2245B / Goettingen).